Reading from the N-terminus, the 541-residue chain is Metal transporter Nramp1 (541 aa).

Asn-17 carries N-linked (GlcNAc...) asparagine glycosylation. A run of 10 helical transmembrane segments spans residues 45-65 (LFAY…PGNF), 78-98 (ELLW…SLAA), 122-142 (FILW…EVIG), 153-173 (IPVW…LALQ), 182-202 (LFIA…LGYA), 222-242 (GAAG…NLFL), 271-291 (GFAL…SGAV), 315-335 (FLLE…ALLA), 371-391 (SLAI…GAGK), and 392-412 (LIII…VPLL). Asn-426 carries an N-linked (GlcNAc...) asparagine glycan. Helical transmembrane passes span 430–450 (ISSI…YYLA) and 465–485 (VAAI…LAGV). A glycan (N-linked (GlcNAc...) asparagine) is linked at Asn-511.

Belongs to the NRAMP (TC 2.A.55) family.

The protein resides in the membrane. Functionally, probable divalent metal transporter. The polypeptide is Metal transporter Nramp1 (Populus trichocarpa (Western balsam poplar)).